A 430-amino-acid polypeptide reads, in one-letter code: Argininosuccinate lyase (430 aa).

The protein belongs to the lyase 1 family. Argininosuccinate lyase subfamily.

It is found in the cytoplasm. The enzyme catalyses 2-(N(omega)-L-arginino)succinate = fumarate + L-arginine. It participates in amino-acid biosynthesis; L-arginine biosynthesis; L-arginine from L-ornithine and carbamoyl phosphate: step 3/3. This Sorangium cellulosum (strain So ce56) (Polyangium cellulosum (strain So ce56)) protein is Argininosuccinate lyase.